A 420-amino-acid chain; its full sequence is Ammonia monooxygenase beta subunit (420 aa).

An N-terminal signal peptide occupies residues 1–25 (MGIKNLYKRGVMGLYGVAYAVAALA). The Cu cation site is built by His-38, His-142, and His-144. The next 2 membrane-spanning stretches (helical) occupy residues 193-213 (GIFWHVVWMSIGIFWIGVFTA) and 240-260 (ITWVLAILTLALVWGGYRYTE).

As to quaternary structure, the soluble ammonia monooxygenase is a nonamer composed of three alpha subunits (AmoA), three beta subunits (AmoB) and three gamma subunits (Cytochrome c1 PetC). Requires Cu(2+) as cofactor.

The protein resides in the cell membrane. The protein localises to the cytoplasm. It catalyses the reaction AH2 + NH4(+) + O2 = hydroxylamine + A + H2O + H(+). In vitro, inhibited by acetylene. Functionally, part of the ammonia monooxygenase complex, which catalyzes the oxidation of ammonia to hydroxylamine, the first reaction in the process of ammonia oxidation to nitrite. The sequence is that of Ammonia monooxygenase beta subunit from Nitrosomonas europaea (strain ATCC 19718 / CIP 103999 / KCTC 2705 / NBRC 14298).